The following is a 531-amino-acid chain: Peptide chain release factor 3 (531 aa).

One can recognise a tr-type G domain in the interval 10–278 (RRRRTFAIIS…SLIEWAPAPK (269 aa)). GTP contacts are provided by residues 19 to 26 (SHPDAGKT), 87 to 91 (DTPGH), and 141 to 144 (NKYD).

It belongs to the TRAFAC class translation factor GTPase superfamily. Classic translation factor GTPase family. PrfC subfamily.

The protein localises to the cytoplasm. Increases the formation of ribosomal termination complexes and stimulates activities of RF-1 and RF-2. It binds guanine nucleotides and has strong preference for UGA stop codons. It may interact directly with the ribosome. The stimulation of RF-1 and RF-2 is significantly reduced by GTP and GDP, but not by GMP. This chain is Peptide chain release factor 3, found in Neisseria meningitidis serogroup A / serotype 4A (strain DSM 15465 / Z2491).